The chain runs to 2500 residues: Non-reducing polyketide synthase atr1 (2500 aa).

The segment at 13–260 (VFSPQSKAPK…HNPENANLAL (248 aa)) is N-terminal acylcarrier protein transacylase domain (SAT). The Ketosynthase family 3 (KS3) domain occupies 385–808 (TDAVAVVGMA…GSNSAVLLCQ (424 aa)). Catalysis depends on for beta-ketoacyl synthase activity residues Cys-557, His-692, and His-731. The malonyl-CoA:ACP transacylase (MAT) domain stretch occupies residues 908–1199 (MTFSGQSRQS…EFPERHTFLD (292 aa)). The For acyl/malonyl transferase activity role is filled by Ser-995. The interval 1286–1413 (PRLVEPRTKP…GDFGFTTQTQ (128 aa)) is N-terminal hotdog fold. A PKS/mFAS DH domain is found at 1286–1584 (PRLVEPRTKP…FTKLPITRLE (299 aa)). Positions 1287 to 1583 (RLVEPRTKPS…QFTKLPITRL (297 aa)) are product template (PT) domain. His-1317 functions as the Proton acceptor; for dehydratase activity in the catalytic mechanism. The segment at 1433–1584 (SETLKSKRAY…FTKLPITRLE (152 aa)) is C-terminal hotdog fold. Asp-1495 (proton donor; for dehydratase activity) is an active-site residue. Positions 1594 to 1649 (AHNTPILKSSQQDSIVSASSSSSTEHSDDDSEDDGSRSPSHSDTSVDSESEAPADN) are disordered. The segment covering 1602 to 1617 (SSQQDSIVSASSSSST) has biased composition (low complexity). The Carrier domain occupies 1649–1725 (NGAAKKLKSL…RIVAPEMAAK (77 aa)). Position 1683 is an O-(pantetheine 4'-phosphoryl)serine (Ser-1683). The tract at residues 2164–2496 (KSYRIETMPY…YEFIFDVVGR (333 aa)) is thioesterase (TE) domain. Catalysis depends on for thioesterase activity residues Ser-2285 and Asp-2434.

It catalyses the reaction 6 malonyl-CoA + 2 acetyl-CoA + 2 S-adenosyl-L-methionine + 3 H(+) = 4-O-demethylbarbatate + 2 S-adenosyl-L-homocysteine + 6 CO2 + 8 CoA + H2O. Its pathway is secondary metabolite biosynthesis; terpenoid biosynthesis. In terms of biological role, non-reducing polyketide synthase; part of the gene cluster that mediates the biosynthesis of atranorin, a depside of polyketide origin that accumulates in the cortical or medullary layers of lichen thalli. The first step in the pathway is performed by the non-reducing polyketide synthase atr1 that produces 4-O-demethylbarbatic acid composed of two 3-methylorsellinic acid (3MOA) moieties from S-adenosyl-L-methionine (SAM), acetyl-CoA and malonyl-CoA units. The pathway continues with the actions of the cytochrome P450 monooygenase atr2 that catalizes the oxidation of c-9 and the O-methyltransferase atr3 that performs the methylation of the carboxyl group to yield atranorin, via the proatranorin II and III intermediates if atr2 acts first, or the proatranorin I intermediate if atr3 acts first. The sequence is that of Non-reducing polyketide synthase atr1 from Stereocaulon alpinum (Alpine snow lichen).